Reading from the N-terminus, the 244-residue chain is MIIYPAIDLKDGQCVRLVQGRVENKTVYSDAPANVARSFQEQGASFLHIVDLDGAFQGSPQNLKAIEAIAAAIDISFQVGGGLRQLSDVEKLLALGASRVIIGTRAVSHPDFIANLLDKFGPERIVLGLDAKEGMVAVEGWVSTSSVSAIDFGLQMKALGIQTAIYTDVSRDGLLQGPNLAAIKEMASSTGLDIIASGGVSSLDNIRALKELENDGVSGAIIGKALYDGKIGLVDALREAESKF.

Asp-8 functions as the Proton acceptor in the catalytic mechanism. The Proton donor role is filled by Asp-130.

This sequence belongs to the HisA/HisF family.

The protein resides in the cytoplasm. It carries out the reaction 1-(5-phospho-beta-D-ribosyl)-5-[(5-phospho-beta-D-ribosylamino)methylideneamino]imidazole-4-carboxamide = 5-[(5-phospho-1-deoxy-D-ribulos-1-ylimino)methylamino]-1-(5-phospho-beta-D-ribosyl)imidazole-4-carboxamide. It participates in amino-acid biosynthesis; L-histidine biosynthesis; L-histidine from 5-phospho-alpha-D-ribose 1-diphosphate: step 4/9. The sequence is that of 1-(5-phosphoribosyl)-5-[(5-phosphoribosylamino)methylideneamino] imidazole-4-carboxamide isomerase from Syntrophomonas wolfei subsp. wolfei (strain DSM 2245B / Goettingen).